Consider the following 426-residue polypeptide: Serine--tRNA ligase (426 aa).

233-235 (TAE) is a binding site for L-serine. Residue 264–266 (RSE) participates in ATP binding. L-serine is bound at residue Glu287. 351–354 (EISS) contacts ATP. Ser387 lines the L-serine pocket.

This sequence belongs to the class-II aminoacyl-tRNA synthetase family. Type-1 seryl-tRNA synthetase subfamily. Homodimer. The tRNA molecule binds across the dimer.

The protein localises to the cytoplasm. It carries out the reaction tRNA(Ser) + L-serine + ATP = L-seryl-tRNA(Ser) + AMP + diphosphate + H(+). The catalysed reaction is tRNA(Sec) + L-serine + ATP = L-seryl-tRNA(Sec) + AMP + diphosphate + H(+). It functions in the pathway aminoacyl-tRNA biosynthesis; selenocysteinyl-tRNA(Sec) biosynthesis; L-seryl-tRNA(Sec) from L-serine and tRNA(Sec): step 1/1. Functionally, catalyzes the attachment of serine to tRNA(Ser). Is also able to aminoacylate tRNA(Sec) with serine, to form the misacylated tRNA L-seryl-tRNA(Sec), which will be further converted into selenocysteinyl-tRNA(Sec). The polypeptide is Serine--tRNA ligase (Pseudomonas fluorescens (strain Pf0-1)).